Consider the following 467-residue polypeptide: A-type ATP synthase subunit B (467 aa).

Residues 95–114 are disordered; the sequence is GKGQPRDHMPLPPPEDFRDV.

The protein belongs to the ATPase alpha/beta chains family. As to quaternary structure, has multiple subunits with at least A(3), B(3), C, D, E, F, H, I and proteolipid K(x).

Its subcellular location is the cell membrane. Its function is as follows. Component of the A-type ATP synthase that produces ATP from ADP in the presence of a proton gradient across the membrane. The B chain is a regulatory subunit. This Pyrobaculum islandicum (strain DSM 4184 / JCM 9189 / GEO3) protein is A-type ATP synthase subunit B.